Here is a 222-residue protein sequence, read N- to C-terminus: Protein ORM1 (222 aa).

The disordered stretch occupies residues 1 to 57 (MTELDYQGTAEAASTSYSRNQTDLKPFPSAGSASSSIKTTEPVKDHRRRRSSSIISH). Residues 1–85 (MTELDYQGTA…NATWVDQRGA (85 aa)) are Cytoplasmic-facing. Polar residues predominate over residues 12-23 (AASTSYSRNQTD). Phosphoserine is present on residues S29, S32, and S56. The helical transmembrane segment at 86–106 (WIIHVVIIILLKLFYNLFPGV) threads the bilayer. The Extracellular segment spans residues 107-109 (TTE). A helical transmembrane segment spans residues 110 to 130 (WSWTLTNMTYVIGSYVMFHLI). The Cytoplasmic segment spans residues 131-162 (KGTPFDFNGGAYDNLTMWEQIDDETLYTPSRK). A helical membrane pass occupies residues 163-183 (FLISVPIALFLVSTHYAHYDL). K184 is a topological domain (extracellular). The helical transmembrane segment at 185 to 205 (LFSWNCFLTTFGAVVPKLPVT) threads the bilayer. Over 206–222 (HRLRISIPGITGRAQIS) the chain is Cytoplasmic.

Belongs to the ORM family. In terms of assembly, component of the SPOTS complex, at least composed of LCB1/2 (LCB1 and/or LCB2), ORM1/2 (ORM1 and/or ORM2), SAC1 and TSC3. Post-translationally, phosphorylated in case of disruption of sphingolipid synthesis. Phosphorylation regulates inhibitory activity of serine palmitoyltransferases (LCB1 and LCB2).

It is found in the endoplasmic reticulum membrane. In terms of biological role, component of the SPOTS complex that acts as a negative regulator of sphingolipid synthesis. Acts by inhibiting serine palmitoyltransferases (LCB1 and LCB2) activity. Along with ORM2, plays a role in the phosphorylation of LAC1 and YPK1, the distribution of actin patches between mother and daughter cells, and in endocytosis. Disruption or inhibition of sphingolipid synthesis leads to the activation and phosphorylation of YPK1 through the TORC2 and PKH1 pathways, which in turn phosphorylates ORM1 and LAG1 to activate sphingolipid synthesis. The polypeptide is Protein ORM1 (ORM1) (Saccharomyces cerevisiae (strain ATCC 204508 / S288c) (Baker's yeast)).